The sequence spans 86 residues: Putative regulatory protein OB1501 (86 aa).

This sequence belongs to the RemA family.

This Oceanobacillus iheyensis (strain DSM 14371 / CIP 107618 / JCM 11309 / KCTC 3954 / HTE831) protein is Putative regulatory protein OB1501.